Reading from the N-terminus, the 489-residue chain is Betaine aldehyde dehydrogenase (489 aa).

K(+) contacts are provided by T26 and D93. 150-152 is a binding site for NAD(+); it reads GAW. The active-site Charge relay system is the K162. 176-179 provides a ligand contact to NAD(+); the sequence is KPSE. Residue V180 coordinates K(+). 229-232 provides a ligand contact to NAD(+); that stretch reads GVET. Residue L245 participates in K(+) binding. The active-site Proton acceptor is E251. 3 residues coordinate NAD(+): G253, C285, and E386. C285 acts as the Nucleophile in catalysis. A Cysteine sulfenic acid (-SOH) modification is found at C285. Positions 456 and 459 each coordinate K(+). The active-site Charge relay system is the E463.

The protein belongs to the aldehyde dehydrogenase family. Dimer of dimers. The cofactor is K(+).

The enzyme catalyses betaine aldehyde + NAD(+) + H2O = glycine betaine + NADH + 2 H(+). The protein operates within amine and polyamine biosynthesis; betaine biosynthesis via choline pathway; betaine from betaine aldehyde: step 1/1. Involved in the biosynthesis of the osmoprotectant glycine betaine. Catalyzes the irreversible oxidation of betaine aldehyde to the corresponding acid. This is Betaine aldehyde dehydrogenase from Burkholderia pseudomallei (strain 668).